The primary structure comprises 273 residues: Dermonecrotic toxin LhSicTox-alphaIA1iv (273 aa).

Residue H5 is part of the active site. Mg(2+)-binding residues include E25 and D27. H41 (nucleophile) is an active-site residue. Cystine bridges form between C45-C51 and C47-C190. Mg(2+) is bound at residue D85.

Belongs to the arthropod phospholipase D family. Class II subfamily. Mg(2+) is required as a cofactor. As to expression, expressed by the venom gland.

It is found in the secreted. The catalysed reaction is an N-(acyl)-sphingosylphosphocholine = an N-(acyl)-sphingosyl-1,3-cyclic phosphate + choline. It catalyses the reaction an N-(acyl)-sphingosylphosphoethanolamine = an N-(acyl)-sphingosyl-1,3-cyclic phosphate + ethanolamine. The enzyme catalyses a 1-acyl-sn-glycero-3-phosphocholine = a 1-acyl-sn-glycero-2,3-cyclic phosphate + choline. It carries out the reaction a 1-acyl-sn-glycero-3-phosphoethanolamine = a 1-acyl-sn-glycero-2,3-cyclic phosphate + ethanolamine. In terms of biological role, dermonecrotic toxins cleave the phosphodiester linkage between the phosphate and headgroup of certain phospholipids (sphingolipid and lysolipid substrates), forming an alcohol (often choline) and a cyclic phosphate. This toxin acts on sphingomyelin (SM). It may also act on ceramide phosphoethanolamine (CPE), lysophosphatidylcholine (LPC) and lysophosphatidylethanolamine (LPE), but not on lysophosphatidylserine (LPS), and lysophosphatidylglycerol (LPG). It acts by transphosphatidylation, releasing exclusively cyclic phosphate products as second products. Induces dermonecrosis, hemolysis, increased vascular permeability, edema, inflammatory response, and platelet aggregation. The polypeptide is Dermonecrotic toxin LhSicTox-alphaIA1iv (Loxosceles hirsuta (Recluse spider)).